A 177-amino-acid polypeptide reads, in one-letter code: Inorganic pyrophosphatase (177 aa).

The substrate site is built by K31, R45, and Y57. Mg(2+) is bound by residues D67, D72, and D104. Y141 lines the substrate pocket.

The protein belongs to the PPase family. In terms of assembly, homohexamer. Also forms homotrimers, but the trimeric form is 23% less active than the hexamer. In fact, likely forms a dimer of trimers. Mg(2+) is required as a cofactor.

It is found in the cytoplasm. It carries out the reaction diphosphate + H2O = 2 phosphate + H(+). Inhibited by sodium fluoride (NaF) in vitro, similarly to other class A type inorganic pyrophosphatases. Catalyzes the hydrolysis of inorganic pyrophosphate (PPi) forming two phosphate ions. The hydrolysis of PPi by inorganic pyrophosphatase releases a considerable amount of energy that can drive unfavorable biochemical transformations to completion. Is not active on nucleoside triphosphates (ATP, TTP, GTP, or CTP) or nucleoside diphosphate (ADP). The polypeptide is Inorganic pyrophosphatase (Haloferax volcanii (strain ATCC 29605 / DSM 3757 / JCM 8879 / NBRC 14742 / NCIMB 2012 / VKM B-1768 / DS2) (Halobacterium volcanii)).